The following is a 500-amino-acid chain: NAD(P)H-quinone oxidoreductase chain 4, chloroplastic (500 aa).

14 helical membrane-spanning segments follow: residues 4 to 24 (FPWL…IFFF), 35 to 55 (YTIC…CYHF), 87 to 107 (IGPV…AWPV), 113 to 130 (LFHF…GSFS), 134 to 154 (LLLF…LLSM), 167 to 187 (FILY…GMGL), 208 to 228 (ALEI…LPII), 242 to 262 (HYST…YGLV), 272 to 292 (AHSI…IYAA), 305 to 325 (IAYS…SITD), 330 to 350 (GAIL…FLAG), 386 to 406 (LALP…GIIT), 416 to 436 (ILIT…SLSM), and 463 to 483 (FVSI…DFVF).

This sequence belongs to the complex I subunit 4 family.

It is found in the plastid. Its subcellular location is the chloroplast thylakoid membrane. The enzyme catalyses a plastoquinone + NADH + (n+1) H(+)(in) = a plastoquinol + NAD(+) + n H(+)(out). It catalyses the reaction a plastoquinone + NADPH + (n+1) H(+)(in) = a plastoquinol + NADP(+) + n H(+)(out). In Nandina domestica (Heavenly bamboo), this protein is NAD(P)H-quinone oxidoreductase chain 4, chloroplastic.